The primary structure comprises 295 residues: HTH-type transcriptional regulator TdfR (295 aa).

In terms of domain architecture, HTH lysR-type spans 1–58; the sequence is MEFRQLRYFVAAAEEGNVGAAARRLHISQPPVTRQIHALEQHLGVLLFERSARGVQLT. A DNA-binding region (H-T-H motif) is located at residues 18-37; that stretch reads VGAAARRLHISQPPVTRQIH.

This sequence belongs to the LysR transcriptional regulatory family.

It is found in the cytoplasm. Its function is as follows. Involved in the regulation of 3-chlorocatechol degradation. Transcriptional regulator of tfdB expression. Acts as a repressor in the absence of its effector (either 2-cis-chlorodiene lactone or chloromaleylacetate) but acts as an activator when its effector is present. This is HTH-type transcriptional regulator TdfR (tfdR) from Cupriavidus pinatubonensis (strain JMP 134 / LMG 1197) (Cupriavidus necator (strain JMP 134)).